A 140-amino-acid polypeptide reads, in one-letter code: Nucleoside diphosphate kinase (140 aa).

ATP is bound by residues K11, F59, R87, T93, R104, and N114. The Pros-phosphohistidine intermediate role is filled by H117.

It belongs to the NDK family. As to quaternary structure, homotetramer. The cofactor is Mg(2+).

The protein resides in the cytoplasm. The catalysed reaction is a 2'-deoxyribonucleoside 5'-diphosphate + ATP = a 2'-deoxyribonucleoside 5'-triphosphate + ADP. It catalyses the reaction a ribonucleoside 5'-diphosphate + ATP = a ribonucleoside 5'-triphosphate + ADP. Functionally, major role in the synthesis of nucleoside triphosphates other than ATP. The ATP gamma phosphate is transferred to the NDP beta phosphate via a ping-pong mechanism, using a phosphorylated active-site intermediate. This is Nucleoside diphosphate kinase from Rickettsia felis (strain ATCC VR-1525 / URRWXCal2) (Rickettsia azadi).